Here is a 134-residue protein sequence, read N- to C-terminus: ATP synthase epsilon chain, chloroplastic (134 aa).

This sequence belongs to the ATPase epsilon chain family. In terms of assembly, F-type ATPases have 2 components, CF(1) - the catalytic core - and CF(0) - the membrane proton channel. CF(1) has five subunits: alpha(3), beta(3), gamma(1), delta(1), epsilon(1). CF(0) has three main subunits: a, b and c.

The protein resides in the plastid. The protein localises to the chloroplast thylakoid membrane. Its function is as follows. Produces ATP from ADP in the presence of a proton gradient across the membrane. The polypeptide is ATP synthase epsilon chain, chloroplastic (Phalaenopsis aphrodite subsp. formosana (Moth orchid)).